A 130-amino-acid polypeptide reads, in one-letter code: Cyclin-dependent kinase 4 inhibitor B (130 aa).

4 ANK repeats span residues 5-34, 38-66, 71-100, and 104-130; these read SSDA…DPNA, FGRR…EPNC, TLTR…RLDV, and WGRL…ATGD. T12 bears the Phosphothreonine mark.

The protein belongs to the CDKN2 cyclin-dependent kinase inhibitor family. As to quaternary structure, heterodimer of CDKN2B with CDK4 or CDK6. Expressed ubiquitously.

Its function is as follows. Interacts strongly with CDK4 and CDK6. Potent inhibitor. Potential effector of TGF-beta induced cell cycle arrest. The polypeptide is Cyclin-dependent kinase 4 inhibitor B (Cdkn2b) (Mus musculus (Mouse)).